An 86-amino-acid polypeptide reads, in one-letter code: Mu-theraphotoxin-Hhn1b 1 (86 aa).

The first 21 residues, 1-21, serve as a signal peptide directing secretion; the sequence is MKASMFLALAGLALLFVVCYA. A propeptide spanning residues 22 to 49 is cleaved from the precursor; it reads SESEEKEFSNELLSSVLAVDDNSKGEER. 3 disulfide bridges follow: Cys51–Cys66, Cys58–Cys73, and Cys65–Cys80. The residue at position 84 (Ile84) is an Isoleucine amide.

This sequence belongs to the neurotoxin 10 (Hwtx-1) family. 22 (Htx-4) subfamily. As to quaternary structure, monomer. Expressed by the venom gland.

Its subcellular location is the secreted. In terms of biological role, neurotoxin that selectively inhibits neuronal tetrodotoxin-sensitive voltage-gated sodium channels (Nav) (IC(50)=44.6 nM). It is active on Nav1.2/SCN2A (IC(50)=22.4 nM), Nav1.6/SCN8A (IC(50)=50.1 nM) and Nav1.7/SCN9A (IC(50)=48.9 nM). It shows low affinity for lipid bilayers. The protein is Mu-theraphotoxin-Hhn1b 1 of Cyriopagopus hainanus (Chinese bird spider).